The chain runs to 133 residues: Small ribosomal subunit protein bS6 (133 aa).

This sequence belongs to the bacterial ribosomal protein bS6 family.

Functionally, binds together with bS18 to 16S ribosomal RNA. This chain is Small ribosomal subunit protein bS6, found in Chlorobium phaeovibrioides (strain DSM 265 / 1930) (Prosthecochloris vibrioformis (strain DSM 265)).